A 153-amino-acid chain; its full sequence is ATP synthase subunit b' (153 aa).

Residues 20 to 40 (TLPLMAVQVVLLTFILNALFF) form a helical membrane-spanning segment.

It belongs to the ATPase B chain family. As to quaternary structure, F-type ATPases have 2 components, F(1) - the catalytic core - and F(0) - the membrane proton channel. F(1) has five subunits: alpha(3), beta(3), gamma(1), delta(1), epsilon(1). F(0) has four main subunits: a(1), b(1), b'(1) and c(10-14). The alpha and beta chains form an alternating ring which encloses part of the gamma chain. F(1) is attached to F(0) by a central stalk formed by the gamma and epsilon chains, while a peripheral stalk is formed by the delta, b and b' chains.

Its subcellular location is the cellular thylakoid membrane. F(1)F(0) ATP synthase produces ATP from ADP in the presence of a proton or sodium gradient. F-type ATPases consist of two structural domains, F(1) containing the extramembraneous catalytic core and F(0) containing the membrane proton channel, linked together by a central stalk and a peripheral stalk. During catalysis, ATP synthesis in the catalytic domain of F(1) is coupled via a rotary mechanism of the central stalk subunits to proton translocation. Its function is as follows. Component of the F(0) channel, it forms part of the peripheral stalk, linking F(1) to F(0). The b'-subunit is a diverged and duplicated form of b found in plants and photosynthetic bacteria. This Prochlorococcus marinus (strain NATL2A) protein is ATP synthase subunit b'.